A 214-amino-acid polypeptide reads, in one-letter code: dITP/XTP pyrophosphatase (214 aa).

16-21 provides a ligand contact to substrate; that stretch reads THNPGK. Mg(2+)-binding residues include aspartate 48 and aspartate 77. Catalysis depends on aspartate 77, which acts as the Proton acceptor. Substrate-binding positions include serine 78, 163 to 166, lysine 186, and 198 to 199; these read FGYD and HR.

This sequence belongs to the HAM1 NTPase family. In terms of assembly, homodimer. Mg(2+) serves as cofactor.

The catalysed reaction is XTP + H2O = XMP + diphosphate + H(+). It catalyses the reaction dITP + H2O = dIMP + diphosphate + H(+). The enzyme catalyses ITP + H2O = IMP + diphosphate + H(+). Functionally, pyrophosphatase that catalyzes the hydrolysis of nucleoside triphosphates to their monophosphate derivatives, with a high preference for the non-canonical purine nucleotides XTP (xanthosine triphosphate), dITP (deoxyinosine triphosphate) and ITP. Seems to function as a house-cleaning enzyme that removes non-canonical purine nucleotides from the nucleotide pool, thus preventing their incorporation into DNA/RNA and avoiding chromosomal lesions. This Bradyrhizobium sp. (strain BTAi1 / ATCC BAA-1182) protein is dITP/XTP pyrophosphatase.